Reading from the N-terminus, the 626-residue chain is Hemocyanin AA6 chain (626 aa).

Cu cation-binding residues include His-170, His-174, His-201, His-321, His-325, and His-361. Position 374 is a phosphoserine (Ser-374).

This sequence belongs to the tyrosinase family. Hemocyanin subfamily. In terms of assembly, scorpion hemocyanin is a 24-chain polymer with 8 different chains identified, assembled in hexameric substructures. Three disulfide bonds are present. In terms of tissue distribution, hemolymph.

Its subcellular location is the secreted. The protein localises to the extracellular space. Its function is as follows. Hemocyanins are copper-containing oxygen carriers occurring freely dissolved in the hemolymph of many mollusks and arthropods. The chain is Hemocyanin AA6 chain from Androctonus australis (Sahara scorpion).